A 454-amino-acid polypeptide reads, in one-letter code: Bifunctional protein GlmU (454 aa).

Positions 1-226 (MALNVVILAA…AVEVEGANNR (226 aa)) are pyrophosphorylase. UDP-N-acetyl-alpha-D-glucosamine-binding positions include 8-11 (LAAG), K22, Q73, 78-79 (GT), 100-102 (YGD), G137, E151, N166, and N224. D102 contacts Mg(2+). Residue N224 participates in Mg(2+) binding. The segment at 227–247 (VQLAQLERAYQARAAEKLMLE) is linker. The interval 248–454 (GANLRDPARI…GWPRPVKLKK (207 aa)) is N-acetyltransferase. The UDP-N-acetyl-alpha-D-glucosamine site is built by R330 and K348. H360 functions as the Proton acceptor in the catalytic mechanism. UDP-N-acetyl-alpha-D-glucosamine contacts are provided by Y363 and N374. Acetyl-CoA contacts are provided by residues A377, 383-384 (NY), S402, A420, and R437.

It in the N-terminal section; belongs to the N-acetylglucosamine-1-phosphate uridyltransferase family. The protein in the C-terminal section; belongs to the transferase hexapeptide repeat family. In terms of assembly, homotrimer. It depends on Mg(2+) as a cofactor.

Its subcellular location is the cytoplasm. The enzyme catalyses alpha-D-glucosamine 1-phosphate + acetyl-CoA = N-acetyl-alpha-D-glucosamine 1-phosphate + CoA + H(+). It carries out the reaction N-acetyl-alpha-D-glucosamine 1-phosphate + UTP + H(+) = UDP-N-acetyl-alpha-D-glucosamine + diphosphate. The protein operates within nucleotide-sugar biosynthesis; UDP-N-acetyl-alpha-D-glucosamine biosynthesis; N-acetyl-alpha-D-glucosamine 1-phosphate from alpha-D-glucosamine 6-phosphate (route II): step 2/2. Its pathway is nucleotide-sugar biosynthesis; UDP-N-acetyl-alpha-D-glucosamine biosynthesis; UDP-N-acetyl-alpha-D-glucosamine from N-acetyl-alpha-D-glucosamine 1-phosphate: step 1/1. It functions in the pathway bacterial outer membrane biogenesis; LPS lipid A biosynthesis. Catalyzes the last two sequential reactions in the de novo biosynthetic pathway for UDP-N-acetylglucosamine (UDP-GlcNAc). The C-terminal domain catalyzes the transfer of acetyl group from acetyl coenzyme A to glucosamine-1-phosphate (GlcN-1-P) to produce N-acetylglucosamine-1-phosphate (GlcNAc-1-P), which is converted into UDP-GlcNAc by the transfer of uridine 5-monophosphate (from uridine 5-triphosphate), a reaction catalyzed by the N-terminal domain. This chain is Bifunctional protein GlmU, found in Shewanella pealeana (strain ATCC 700345 / ANG-SQ1).